We begin with the raw amino-acid sequence, 192 residues long: Ribosomal RNA small subunit methyltransferase G (192 aa).

S-adenosyl-L-methionine-binding positions include Gly63, Phe68, 112-113 (IE), and Arg125.

This sequence belongs to the methyltransferase superfamily. RNA methyltransferase RsmG family.

It is found in the cytoplasm. The enzyme catalyses guanosine(527) in 16S rRNA + S-adenosyl-L-methionine = N(7)-methylguanosine(527) in 16S rRNA + S-adenosyl-L-homocysteine. Specifically methylates the N7 position of guanine in position 527 of 16S rRNA. In Rickettsia felis (strain ATCC VR-1525 / URRWXCal2) (Rickettsia azadi), this protein is Ribosomal RNA small subunit methyltransferase G.